Consider the following 61-residue polypeptide: Adipokinetic prohormone type 2 (61 aa).

An N-terminal signal peptide occupies residues 1 to 22 (MRQGCALTLMLLVVVCAALSAA). Gln23 is modified (pyrrolidone carboxylic acid). Trp30 is modified (tryptophan amide).

It belongs to the AKH/HRTH/RPCH family. In terms of assembly, adipokinetic hormone precursor-related peptide (APRP) can form three type of disulfide-bond dimers: p1 (alpha-alpha), p2 (alpha-beta), and p3 (beta-beta).

The protein resides in the secreted. In terms of biological role, this hormone, released from cells in the corpora cardiaca, causes release of diglycerides from the fat body and stimulation of muscles to use these diglycerides as an energy source during energy-demanding processes. This chain is Adipokinetic prohormone type 2, found in Schistocerca nitens (Vagrant locust).